The primary structure comprises 758 residues: 5-methyltetrahydropteroyltriglutamate--homocysteine methyltransferase (758 aa).

5-methyltetrahydropteroyltri-L-glutamate contacts are provided by residues R16 to K19 and K112. Residues I433–S435 and E486 each bind L-homocysteine. Residues I433–S435 and E486 each bind L-methionine. 5-methyltetrahydropteroyltri-L-glutamate-binding positions include R517–C518 and W563. Residue D601 participates in L-homocysteine binding. D601 is a binding site for L-methionine. Residue E607 coordinates 5-methyltetrahydropteroyltri-L-glutamate. H643, C645, and E667 together coordinate Zn(2+). The Proton donor role is filled by H696. Residue C728 coordinates Zn(2+).

It belongs to the vitamin-B12 independent methionine synthase family. Requires Zn(2+) as cofactor.

It carries out the reaction 5-methyltetrahydropteroyltri-L-glutamate + L-homocysteine = tetrahydropteroyltri-L-glutamate + L-methionine. Its pathway is amino-acid biosynthesis; L-methionine biosynthesis via de novo pathway; L-methionine from L-homocysteine (MetE route): step 1/1. Functionally, catalyzes the transfer of a methyl group from 5-methyltetrahydrofolate to homocysteine resulting in methionine formation. The polypeptide is 5-methyltetrahydropteroyltriglutamate--homocysteine methyltransferase (Neisseria meningitidis serogroup B (strain ATCC BAA-335 / MC58)).